The following is a 496-amino-acid chain: Sporulation-killing factor biosynthesis protein SkfC (496 aa).

A run of 7 helical transmembrane segments spans residues 1–21 (MNSL…LLFI), 224–244 (VSGM…LVFM), 248–268 (TSII…SLTL), 291–311 (LLGI…VFIC), 331–351 (IVQI…TSLL), 399–419 (LLMI…IIVS), and 443–463 (FIFG…CVLV).

It localises to the membrane. In terms of biological role, required for production of the bacteriocin SkfA. This chain is Sporulation-killing factor biosynthesis protein SkfC, found in Bacillus subtilis (strain 168).